The sequence spans 376 residues: Pulmonary surfactant-associated protein B (376 aa).

An N-terminal signal peptide occupies residues 1-24 (MAKLHLQWLLLLPTLCSLGAATES). One can recognise a Saposin A-type domain in the interval 25-63 (ASSPDCAQGPKFWCQSLEQAIQCRALGHCLQEVWGHAGA). Positions 25 to 190 (ASSPDCAQGP…PHTQDLSEQQ (166 aa)) are excised as a propeptide. 3 Saposin B-type domains span residues 63–145 (ANDL…PLGQ), 194–271 (PLPF…STAD), and 290–365 (QDTE…EAPA). 9 disulfides stabilise this stretch: Cys67/Cys141, Cys70/Cys135, Cys98/Cys110, Cys198/Cys267, Cys201/Cys261, Cys225/Cys236, Cys294/Cys361, Cys297/Cys355, and Cys320/Cys330. Residues 270–376 (ADAIGPALPA…PLQCFQTPHL (107 aa)) constitute a propeptide that is removed on maturation. Asn306 is a glycosylation site (N-linked (GlcNAc...) asparagine).

In terms of assembly, homodimer; disulfide-linked.

The protein resides in the secreted. It localises to the extracellular space. It is found in the surface film. Its function is as follows. Pulmonary surfactant-associated proteins promote alveolar stability by lowering the surface tension at the air-liquid interface in the peripheral air spaces. SP-B increases the collapse pressure of palmitic acid to nearly 70 millinewtons per meter. The chain is Pulmonary surfactant-associated protein B (Sftpb) from Rattus norvegicus (Rat).